The following is a 906-amino-acid chain: Aconitate hydratase A (906 aa).

3 residues coordinate [4Fe-4S] cluster: Cys-443, Cys-509, and Cys-512.

Belongs to the aconitase/IPM isomerase family. In terms of assembly, monomer. The cofactor is [4Fe-4S] cluster.

It catalyses the reaction citrate = D-threo-isocitrate. It carries out the reaction (2S,3R)-3-hydroxybutane-1,2,3-tricarboxylate = 2-methyl-cis-aconitate + H2O. It participates in carbohydrate metabolism; tricarboxylic acid cycle; isocitrate from oxaloacetate: step 2/2. It functions in the pathway organic acid metabolism; propanoate degradation. Its function is as follows. Involved in the catabolism of short chain fatty acids (SCFA) via the tricarboxylic acid (TCA)(acetyl degradation route) and probably via the 2-methylcitrate cycle I (propionate degradation route). Catalyzes the reversible isomerization of citrate to isocitrate via cis-aconitate. Could catalyze the hydration of 2-methyl-cis-aconitate to yield (2R,3S)-2-methylisocitrate. The apo form of AcnA functions as a RNA-binding regulatory protein. The sequence is that of Aconitate hydratase A from Bradyrhizobium diazoefficiens (strain JCM 10833 / BCRC 13528 / IAM 13628 / NBRC 14792 / USDA 110).